Consider the following 131-residue polypeptide: Large ribosomal subunit protein bL12 (131 aa).

The protein belongs to the bacterial ribosomal protein bL12 family. Homodimer. Part of the ribosomal stalk of the 50S ribosomal subunit. Forms a multimeric L10(L12)X complex, where L10 forms an elongated spine to which 2 to 4 L12 dimers bind in a sequential fashion. Binds GTP-bound translation factors.

In terms of biological role, forms part of the ribosomal stalk which helps the ribosome interact with GTP-bound translation factors. Is thus essential for accurate translation. This chain is Large ribosomal subunit protein bL12, found in Prochlorococcus marinus (strain MIT 9312).